We begin with the raw amino-acid sequence, 20 residues long: Fibrinogen (20 aa).

The 20-residue stretch at 1–20 (LHSNLEYQYRYSGRVASGIP) folds into the Vitellogenin domain.

In terms of tissue distribution, secreted into the hemolymph.

The protein resides in the secreted. It localises to the extracellular space. In terms of biological role, involved in lipid transport. Plays a role in hemolymph clotting. May be involved in wound healing in the cuticle. The sequence is that of Fibrinogen from Pacifastacus leniusculus (Signal crayfish).